The following is a 975-amino-acid chain: MKKMLFMNKKEKKEEQSPAHSSLAQQHQLAQQQYQLQQQQLQLQYQQHQQQLQLAQQQKQNEQNLAQLSTSTSSNSSVNNTTNTNTNTTNSSSISSNNNNNNNTAVPILKAHDFCGTIMILGHTESGKTTLQRQLEFIYGVTDPTDAKHYQRLIYGNTLATLIRFIENSERLNITLSPDNLARVKRIQSQPVELARNRLPRFPLKLGWDCKCIWEDKVIQSVYNHSKICSEIRTPGRPKYYMDRMFKVFDPSYTPTEMDIISAYDQKDTIQSSAIIHKRFKVDLFGCSGKQSSPKNWVGLHQNYKPNYIFYVVALKDYFSDHLVATQNTDPTIVEMCNNHIHRNLLLESLNSFETLTKSELFDKSLAIYLIFNTSDIFYENIKQYDLKSCFSEYEGGNDPEKAVSFISNKFTKFLQNKDKPYKSHIVNLLDKNNVREEFEGIFDSLKIDAEKRGFTTPYNQSNSSPVSSIGSNSSRNSRLPNTSVSIPGLYSSDNDNTRLKNVNNNNNNNNNTTTYGSSTFPSSVISTTGSISNSIASAMDNDSSYSNESSPTSSMTLLPTTTTTTTTTTTTATTTDSTNNNNNNATVVIGKGKPPKEPKPVKPPKEPKPPKEPKPPKEPKPPKEPKPIKEPKEKPVKESKPPKEPKPIKEPKESKEPKEPKEPKPTKPPKEKKTSKVDGAAESKKNGADSCGNGGVGSKIKLESGFGSLQGRRKNMEDTHVILNNLMGAVTYNGPPKDIPISYYAVYDGHGGTETSTLLEPTVHNCLVNSQSFRDGDYEQAFRDAYAEADDIVIEKCEKSGSTGVSALLVGNKLYTANVGDSEIVLARAQPNANPKGPVTYEPVLLSYKHLASDDQEKKRVTDLGGMIIFNRLFGSLAVSRSFGDKEYKEGEKKFCVSDPYQTTTDLTARDHFFILACDGLWDKVEYDEAVQFVQRNIKLGKSATEISELLAQDSYDRGSGDNITVLVVILNWN.

Disordered regions lie at residues 1 to 31 (MKKMLFMNKKEKKEEQSPAHSSLAQQHQLAQ) and 64 to 99 (NLAQLSTSTSSNSSVNNTTNTNTNTTNSSSISSNNN). A compositionally biased stretch (basic and acidic residues) spans 8-17 (NKKEKKEEQS). The stretch at 21–70 (SSLAQQHQLAQQQYQLQQQQLQLQYQQHQQQLQLAQQQKQNEQNLAQLST) forms a coiled coil. Residues 114–458 (FCGTIMILGH…DAEKRGFTTP (345 aa)) enclose the G-alpha domain. The interval 117-130 (TIMILGHTESGKTT) is G1 motif. GTP contacts are provided by residues 122 to 129 (GHTESGKT), 261 to 267 (ISAYDQK), 286 to 290 (GCSGK), and 373 to 376 (NTSD). The interval 259–267 (DIISAYDQK) is G2 motif. The segment at 282-291 (VDLFGCSGKQ) is G3 motif. Residues 369–376 (YLIFNTSD) are G4 motif. Positions 427–432 (VNLLDK) are G5 motif. Disordered stretches follow at residues 455 to 520 (FTTP…GSST) and 541 to 700 (DNDS…VGSK). Composition is skewed to low complexity over residues 460–478 (NQSNSSPVSSIGSNSSRNS), 500–515 (LKNVNNNNNNNNNTTT), and 544–587 (SSYS…NNAT). The segment covering 595-688 (PPKEPKPVKP…DGAAESKKNG (94 aa)) has biased composition (basic and acidic residues). Residues 704–972 (ESGFGSLQGR…DNITVLVVIL (269 aa)) enclose the PPM-type phosphatase domain. Aspartate 749, glycine 750, aspartate 920, and aspartate 963 together coordinate Mn(2+).

This sequence in the N-terminal section; belongs to the G-alpha family. In the C-terminal section; belongs to the PP2C family. As to quaternary structure, g proteins are composed of 3 units; alpha, beta and gamma. The alpha chain contains the guanine nucleotide binding site. Mg(2+) serves as cofactor. Requires Mn(2+) as cofactor.

The protein localises to the cytoplasm. It is found in the cytosol. The protein resides in the cell membrane. The enzyme catalyses O-phospho-L-seryl-[protein] + H2O = L-seryl-[protein] + phosphate. It carries out the reaction O-phospho-L-threonyl-[protein] + H2O = L-threonyl-[protein] + phosphate. Inhibited by 50 mM NaF (sodium fluoride). Involved in cell-type differentiation and morphogenesis. Dephosphorylates casein; in vitro. May also be involved as modulators or transducers in various transmembrane signaling systems. The polypeptide is Protein spalten (spnA) (Dictyostelium discoideum (Social amoeba)).